The sequence spans 557 residues: MPTLVAEKKRIQDLLGMDLGDRRFEKILFDFGLELDDVVEEEGKTMYRIEIPANRYDLLCAEGLCYALRAFLSMETYEDIDVEEGEVVVYKTGGEERPCIACAVIKGVDLLSEGAYKSFIDYQDKLHLTIGRNRALVSMGTHDLDKIKGPVFYKSETPERIGFKPLNAEREVNGKELGSRFPPGSKIGRYMRLIEKNEKYPLFEDSMGTIMSLPPIINSDATKISPGTKNVFVEMTGTDFHRVNTALKLLLGCFRGRKIESVEIRNGNERTRTPVMHNRSYVMGLGEINRSLGLDLSLSAAKSYMERMMHSVDTIDESTLRVRVHDIRSDVLHKCDLIEDIAIAHGFNNFRRELPSFFTAGSEIPLNKFSDKLRTELSIMGFDEALTLTLLSREENVIDGDQAVVLMNPKSASYEVCRTSLIPGLMKTVASNLHMKIPFRLFEVSDVVLLDKENECGASNSRRLAAMYCGHTPCLEEVQGSLSLLLKKCGVRHSYSTHNDSARYLKNQSALVIVEDAAIGSIGVCNPEICKTFRVPYAASFFEIDVEKLLSIYMART.

The 77-residue stretch at Met-276 to Arg-352 folds into the B5 domain. Residues Asp-330, Asp-336, Glu-339, and Asp-340 each coordinate Mg(2+).

The protein belongs to the phenylalanyl-tRNA synthetase beta subunit family. Type 2 subfamily. As to quaternary structure, tetramer of two alpha and two beta subunits. Requires Mg(2+) as cofactor.

The protein localises to the cytoplasm. The enzyme catalyses tRNA(Phe) + L-phenylalanine + ATP = L-phenylalanyl-tRNA(Phe) + AMP + diphosphate + H(+). The chain is Probable phenylalanine--tRNA ligase beta subunit from Encephalitozoon cuniculi (strain GB-M1) (Microsporidian parasite).